Consider the following 308-residue polypeptide: Cytochrome b (308 aa).

Helical transmembrane passes span 1 to 21 (FGSL…LMAM), 45 to 66 (WLIR…YLHI), 81 to 101 (WNTG…GYVL), and 146 to 166 (FFAL…VHLT). Residues His-51 and His-65 each contribute to the heme b site. His-150 and His-164 together coordinate heme b. An a ubiquinone-binding site is contributed by His-169. A run of 3 helical transmembrane segments spans residues 194-214 (IKDI…AMFS), 256-276 (LGGV…PFLH), and 288-308 (LSQL…WVGS).

This sequence belongs to the cytochrome b family. As to quaternary structure, the cytochrome bc1 complex contains 11 subunits: 3 respiratory subunits (MT-CYB, CYC1 and UQCRFS1), 2 core proteins (UQCRC1 and UQCRC2) and 6 low-molecular weight proteins (UQCRH/QCR6, UQCRB/QCR7, UQCRQ/QCR8, UQCR10/QCR9, UQCR11/QCR10 and a cleavage product of UQCRFS1). This cytochrome bc1 complex then forms a dimer. The cofactor is heme b.

The protein localises to the mitochondrion inner membrane. Component of the ubiquinol-cytochrome c reductase complex (complex III or cytochrome b-c1 complex) that is part of the mitochondrial respiratory chain. The b-c1 complex mediates electron transfer from ubiquinol to cytochrome c. Contributes to the generation of a proton gradient across the mitochondrial membrane that is then used for ATP synthesis. This chain is Cytochrome b (MT-CYB), found in Scytalopus magellanicus (Magellanic tapaculo).